The chain runs to 286 residues: Protein Bride of doubletime (286 aa).

In terms of assembly, interacts with dco (via nuclear localization signal). Interacts with Ankrd49; interaction promotes the stability of both complex members.

The protein resides in the cytoplasm. It is found in the cytosol. The protein localises to the cell membrane. Functions in planar polarity establishment and circadian rhythms by promoting the activity and localization of dco/dbt. Required for regulating the levels of dco/dbt and per in the nuclei of photoreceptor cells and thereby is involved in normal oscillations of the circadian clock proteins in the eye. In the dark, the cry circadian and rhodopsin visual pathways, activate the accumulation of the protein into Arr1- and Arr2-dependent cytosolic foci which are required for dco localization to photoreceptor nuclei. It is possible that the accumulation into foci results in the dissociation of the protein from dco, thus allowing dco to interact with importins and microtubles for nuclear transport. By promoting nuclei localization and kinase activity of dco towards per, it is essential for regulating normal cycles of per nuclear accumulation in brain circadian neurons and thus is important for normal circadian behavior. Essential for regulating the establishment of planar cell polarity in the wing. Forms a complex with Ankrd49 which likely functions in the regulation of planar polarity by promoting the activity of dco during planar polarity establishment. Within the complex, directly promotes dco activity in regulating phosphorylation and asymmetric localization of core planar polarity proteins such as dsh. This Drosophila melanogaster (Fruit fly) protein is Protein Bride of doubletime.